The following is a 342-amino-acid chain: Methyltransferase ungE' (342 aa).

The protein belongs to the methyltransferase superfamily.

It participates in secondary metabolite biosynthesis. In terms of biological role, methyltransferase; part of the gene cluster that mediates the biosynthesis of the unguisins, gamma-aminobutyric acid (GABA)-containing fungal cyclic heptapeptides with the amino acid sequence cyclo-(D-Ala1-D-Val2-L-Leu3-beta-MePhe4-D-Ala5-D-Trp6-GABA7) for unguisin H and cyclo-(D-Ala1-D-Ala2-L-Leu3-beta-MePhe4-D-Ala5-D-Trp6-GABA7) for unguisin I. Within the pathway, the methyltransferase ungE' is probably involved in the synthesis of the (2R,3R)-beta-methylphenylalanine residue incorporated by the module 4 of the nonribosomal peptide synthetase (NRPS) ungA'. The alanine racemase ungC' catalyzes the interconversion of L-alanine and D-alanine, providing the D-alanine which is accepted by the first adenylation domain of ungA'. UngA' is the main enzyme within the cluster which condenses the 7 residues using its respective 7 modules. The terminal condensation domain (Ct) is involved in cyclization with D-alanine and thereby releasing of unguisins H and I. Finally, the hydrolase ungD' catalyzes the hydrolysis between the D-tryptophan and GABA residues of unguisins H and I to produce the corresponding linear peptides. The protein is Methyltransferase ungE' of Aspergillus campestris (strain IBT 28561).